The following is a 2341-amino-acid chain: Pecanex-like protein 1 (2341 aa).

Helical transmembrane passes span 28 to 50 and 57 to 74; these read ATFV…FTLY and MIIV…FIVL. The interval 98–163 is disordered; it reads FTDQRTKAEQ…SNQIGSGSSR (66 aa). Asn109 carries N-linked (GlcNAc...) asparagine glycosylation. Polar residues predominate over residues 143–163; the sequence is SSRNSYAGLDPSNQIGSGSSR. A glycan (N-linked (GlcNAc...) asparagine) is linked at Asn215. Disordered regions lie at residues 270-294, 311-331, and 344-689; these read HSHS…VAFP, DPVS…SLVE, and DLKI…TRAR. A compositionally biased stretch (basic residues) spans 272–282; that stretch reads HSYRKDHRPRG. 2 stretches are compositionally biased toward polar residues: residues 320 to 331 and 347 to 356; these read KPLSGSKESLVE and INTSQPPTKS. The N-linked (GlcNAc...) asparagine glycan is linked to Asn348. The segment covering 370 to 388 has biased composition (low complexity); sequence SLRSLSTRSSGSTESYCSG. N-linked (GlcNAc...) asparagine glycosylation occurs at Asn394. Over residues 394–404 the composition is skewed to polar residues; the sequence is NSTVSSYKSEQ. 3 stretches are compositionally biased toward basic and acidic residues: residues 430–455, 465–478, and 527–544; these read KKEC…EKIA, HEAK…EMHN, and SKVR…DVRP. Over residues 554-569 the composition is skewed to basic residues; it reads ASAHKSGRRRTGKKRA. Positions 605–635 are enriched in low complexity; that stretch reads QSDLSRASSVQSAHQFSSDSSSSTTSHSCQS. The N-linked (GlcNAc...) asparagine glycan is linked to Asn702. Residues 756–834 form a disordered region; that stretch reads QVAFPEGEEQ…STAQVKVQSR (79 aa). Residues 814 to 832 show a composition bias toward low complexity; it reads LSLQDGQQGQQSTAQVKVQ. N-linked (GlcNAc...) asparagine glycosylation is found at Asn852 and Asn863. The next 3 membrane-spanning stretches (helical) occupy residues 1003–1025, 1032–1049, and 1067–1089; these read ILEN…ILLI, IWVF…YSLL, and IAYS…DYGS. Asn1091 carries N-linked (GlcNAc...) asparagine glycosylation. Residues 1110–1132 traverse the membrane as a helical segment; the sequence is FISARDLVIVFTLCFPIVFFIGL. N-linked (GlcNAc...) asparagine glycosylation is present at Asn1155. Transmembrane regions (helical) follow at residues 1160 to 1182, 1194 to 1213, 1266 to 1288, and 1295 to 1312; these read LLAA…GLCY, IPVL…YHLS, LVVC…FTVL, and VLYT…YVLP. N-linked (GlcNAc...) asparagine glycosylation is found at Asn1579, Asn1720, Asn1982, Asn2062, and Asn2072. Disordered stretches follow at residues 2062–2120 and 2217–2237; these read NATT…SPAR and GQSS…NNSH. Composition is skewed to polar residues over residues 2069-2078, 2096-2114, and 2217-2236; these read PHSNVTQGSI, YPPT…SGLV, and GQSS…ANNS. N-linked (GlcNAc...) asparagine glycosylation is found at Asn2234 and Asn2260.

The protein belongs to the pecanex family.

Its subcellular location is the membrane. The chain is Pecanex-like protein 1 from Homo sapiens (Human).